Consider the following 404-residue polypeptide: Putative glutamate--cysteine ligase 2 (404 aa).

The interval 377-404 is disordered; that stretch reads GPAGKRAHEGGRSFRPAAGAPMSIRGQE.

Belongs to the glutamate--cysteine ligase type 2 family. YbdK subfamily.

It catalyses the reaction L-cysteine + L-glutamate + ATP = gamma-L-glutamyl-L-cysteine + ADP + phosphate + H(+). ATP-dependent carboxylate-amine ligase which exhibits weak glutamate--cysteine ligase activity. This Pseudomonas aeruginosa (strain UCBPP-PA14) protein is Putative glutamate--cysteine ligase 2.